Here is a 1041-residue protein sequence, read N- to C-terminus: Sarcoplasmic/endoplasmic reticulum calcium ATPase 2 (1041 aa).

The Cytoplasmic segment spans residues 1 to 48 (MENAHTKTVEEVLAYFGVNESTGLSLEQVKKLKEKWGSNELPAEEGKT). The helical transmembrane segment at 49 to 69 (LLELVIEQFEDLLVRILLLAA) threads the bilayer. Topologically, residues 70–89 (CISFVLAWFEEGEETITAFV) are lumenal. The helical transmembrane segment at 90–110 (EPFVILLILVANAIVGVWQER) threads the bilayer. Over 111–253 (NAENAIEALK…QERTPLQQKL (143 aa)) the chain is Cytoplasmic. Residues 254-273 (DEFGEQLSKVISLICIAVWI) form a helical membrane-spanning segment. At 274-295 (INIGHFNDPVHGGSWIRGAIYY) the chain is on the lumenal side. Residues 296 to 313 (FKIAVALAVAAIPEGLPA) traverse the membrane as a helical segment. The Ca(2+) site is built by Val304, Ala305, Ile307, and Glu309. At 314–756 (VITTCLALGT…EEGRAIYNNM (443 aa)) the chain is on the cytoplasmic side. Asp351 functions as the 4-aspartylphosphate intermediate in the catalytic mechanism. Positions 351 and 353 each coordinate Mg(2+). ATP-binding residues include Thr353, Glu442, Arg489, Lys514, Arg559, Thr624, Gly625, Asp626, Arg677, and Lys683. Asp702 contributes to the Mg(2+) binding site. Residue Asn705 coordinates ATP. A helical transmembrane segment spans residues 757–776 (KQFIRYLISSNVGEVVCIFL). Residues Asn767 and Glu770 each contribute to the Ca(2+) site. Residues 777 to 786 (TAALGFPEAL) lie on the Lumenal side of the membrane. The chain crosses the membrane as a helical span at residues 787–807 (IPVQLLWVNLVTDGLPATALG). Positions 787–807 (IPVQLLWVNLVTDGLPATALG) are interaction with PLN. Ca(2+) is bound by residues Asn795, Thr798, and Asp799. The Cytoplasmic portion of the chain corresponds to 808-827 (FNPPDLDIMNKPPRNPKEPL). A helical membrane pass occupies residues 828 to 850 (ISGWLFFRYLAIGCYVGAATVGA). Over 851-896 (AAWWFIAADGGPRVTFYQLSHFLQCKEDNPDFSGVDCVVFESPYPM) the chain is Lumenal. A disulfide bridge links Cys875 with Cys887. The helical transmembrane segment at 897 to 916 (TMALSVLVTIEMCNALNSLS) threads the bilayer. Glu907 provides a ligand contact to Ca(2+). Topologically, residues 917–929 (ENQSLMRMPPWEN) are cytoplasmic. Residues 930-948 (IWLVGAICLSMSLHFLILY) traverse the membrane as a helical segment. The segment at 931 to 942 (WLVGAICLSMSL) is interaction with PLN. Residues 949–963 (VEPLPIIFQITPLNV) are Lumenal-facing. Residues 964–984 (TQWLMVLKISLPVILLDETLK) form a helical membrane-spanning segment. Residues 985 to 1041 (YVARNYLEPGKDSVQPATKPCSLSACTEGVSWPFVFITLPLVIWLYSTDTNFSDMFW) lie on the Cytoplasmic side of the membrane.

The protein belongs to the cation transport ATPase (P-type) (TC 3.A.3) family. Type IIA subfamily. Interacts with sarcolipin (SLN). Interacts with phospholamban (PLN). Interacts with myoregulin (MRLN). Interacts with DWORF. Interacts with TMX2. Mg(2+) serves as cofactor. As to expression, only isoform 2 is detected in heart, while both isoforms are expressed in brain, with isoform 2 being predominant.

Its subcellular location is the endoplasmic reticulum membrane. It is found in the sarcoplasmic reticulum membrane. The enzyme catalyses Ca(2+)(in) + ATP + H2O = Ca(2+)(out) + ADP + phosphate + H(+). Reversibly inhibited by phospholamban (PLN) at low calcium concentrations. Inhibited by sarcolipin (SLN) and myoregulin (MRLN). Enhanced by DWORF; DWORF increases activity by displacing sarcolipin (SLN), phospholamban (PLN) and myoregulin (MRLN). Its function is as follows. This magnesium-dependent enzyme catalyzes the hydrolysis of ATP coupled with the translocation of calcium from the cytosol to the sarcoplasmic reticulum lumen. Isoform SERCA2A is involved in the regulation of the contraction/relaxation cycle. May act as a regulator of TNFSF11-mediated Ca(2+) signaling during osteoclastogenesis. This chain is Sarcoplasmic/endoplasmic reticulum calcium ATPase 2 (ATP2A2), found in Gallus gallus (Chicken).